The chain runs to 270 residues: Regulatory protein RecX (270 aa).

Belongs to the RecX family.

The protein localises to the cytoplasm. Its function is as follows. Modulates RecA activity. This Bacillus cereus (strain B4264) protein is Regulatory protein RecX.